Here is a 102-residue protein sequence, read N- to C-terminus: MDAPKPWHLYLLLCRNGSYYAGITNDLERRFQAHLRGTGARYTRANPPLQVLASHPYPDRATASRAEWLLKQQPRARKLAWLQAQGLLPAESRPDDTPLTPA.

Residues 5–80 form the GIY-YIG domain; the sequence is KPWHLYLLLC…KQQPRARKLA (76 aa).

The protein belongs to the UPF0213 family.

The protein is UPF0213 protein XCC3072 of Xanthomonas campestris pv. campestris (strain ATCC 33913 / DSM 3586 / NCPPB 528 / LMG 568 / P 25).